Consider the following 802-residue polypeptide: Penicillin G acylase (802 aa).

Residues 1–24 (MKTKWLISVIILFVFIFPQNLVFA) form the signal peptide. E177 provides a ligand contact to Ca(2+). Residues 235 to 265 (SAVIKASEKVGKERENFVQTSEELGLPLKIG) constitute a propeptide, spacer peptide. S266 serves as the catalytic Nucleophile. Residue D341 participates in Ca(2+) binding.

It belongs to the peptidase S45 family. In terms of assembly, heterodimer of an alpha subunit and a beta subunit processed from the same precursor. Ca(2+) serves as cofactor.

Its subcellular location is the secreted. It catalyses the reaction a penicillin + H2O = 6-aminopenicillanate + a carboxylate. The sequence is that of Penicillin G acylase (pac) from Priestia megaterium (Bacillus megaterium).